Here is a 342-residue protein sequence, read N- to C-terminus: Succinoglycan biosynthesis protein ExoU (342 aa).

This sequence belongs to the glycosyltransferase 2 family.

It is found in the cytoplasm. It participates in glycan metabolism; exopolysaccharide biosynthesis. Its function is as follows. Glycosyltransferase required for the synthesis of succinoglycan (EPS I). Needed for the addition of the sixth sugar (glucose), catalyzes the formation of a beta-1,6 linkage between the fifth and sixth sugar. The chain is Succinoglycan biosynthesis protein ExoU (exoU) from Rhizobium meliloti (strain 1021) (Ensifer meliloti).